A 596-amino-acid polypeptide reads, in one-letter code: Aspartate--tRNA(Asp/Asn) ligase (596 aa).

L-aspartate is bound at residue Glu175. The tract at residues 199-202 (QQYK) is aspartate. Arg221 and His454 together coordinate L-aspartate. 221–223 (RDE) is an ATP binding site. Glu488 contacts ATP. Arg495 contributes to the L-aspartate binding site. 540 to 543 (GVDR) contributes to the ATP binding site.

The protein belongs to the class-II aminoacyl-tRNA synthetase family. Type 1 subfamily. As to quaternary structure, homodimer.

It is found in the cytoplasm. The catalysed reaction is tRNA(Asx) + L-aspartate + ATP = L-aspartyl-tRNA(Asx) + AMP + diphosphate. In terms of biological role, aspartyl-tRNA synthetase with relaxed tRNA specificity since it is able to aspartylate not only its cognate tRNA(Asp) but also tRNA(Asn). Reaction proceeds in two steps: L-aspartate is first activated by ATP to form Asp-AMP and then transferred to the acceptor end of tRNA(Asp/Asn). This is Aspartate--tRNA(Asp/Asn) ligase from Bartonella henselae (strain ATCC 49882 / DSM 28221 / CCUG 30454 / Houston 1) (Rochalimaea henselae).